The following is a 315-amino-acid chain: MSQSLRIVFAGTPDFAARHLAALLSSEHEIIAVYTQPDRPAGRGKKLTASPVKTLALEHNVPVYQPENFKSDESKQQLAALNADLMVVVAYGLLLPKVVLDTPKLGCINVHGSILPRWRGAAPIQRSIWAGDSETGVTIMQMDVGLDTGDMLKIATLPIEASDTSASMYDKLAELGPQALLECLQEIAQGTAVAVKQDDALANYAHKLSKEEARINWNDEAAHIERCIRAFNPWPMSHFEVAENSIKVWQARVETRAVTQTPGTIIQADKSGIYVATGQDVLVLESLQIPGKKALPVQDILNARADWFSVGSQLS.

113 to 116 (SILP) lines the (6S)-5,6,7,8-tetrahydrofolate pocket.

This sequence belongs to the Fmt family.

The catalysed reaction is L-methionyl-tRNA(fMet) + (6R)-10-formyltetrahydrofolate = N-formyl-L-methionyl-tRNA(fMet) + (6S)-5,6,7,8-tetrahydrofolate + H(+). In terms of biological role, attaches a formyl group to the free amino group of methionyl-tRNA(fMet). The formyl group appears to play a dual role in the initiator identity of N-formylmethionyl-tRNA by promoting its recognition by IF2 and preventing the misappropriation of this tRNA by the elongation apparatus. In Vibrio cholerae serotype O1 (strain M66-2), this protein is Methionyl-tRNA formyltransferase.